The sequence spans 134 residues: Phosphoribosyl-AMP cyclohydrolase (134 aa).

Residue D90 participates in Mg(2+) binding. C91 provides a ligand contact to Zn(2+). Mg(2+) contacts are provided by D92 and D94. C107 and C114 together coordinate Zn(2+).

Belongs to the PRA-CH family. In terms of assembly, homodimer. The cofactor is Mg(2+). Zn(2+) is required as a cofactor.

The protein resides in the cytoplasm. The enzyme catalyses 1-(5-phospho-beta-D-ribosyl)-5'-AMP + H2O = 1-(5-phospho-beta-D-ribosyl)-5-[(5-phospho-beta-D-ribosylamino)methylideneamino]imidazole-4-carboxamide. It functions in the pathway amino-acid biosynthesis; L-histidine biosynthesis; L-histidine from 5-phospho-alpha-D-ribose 1-diphosphate: step 3/9. Functionally, catalyzes the hydrolysis of the adenine ring of phosphoribosyl-AMP. The chain is Phosphoribosyl-AMP cyclohydrolase from Arthrobacter sp. (strain FB24).